We begin with the raw amino-acid sequence, 421 residues long: Testin (421 aa).

The region spanning 92 to 199 (MILTNPVAAK…GDVKLPCEMD (108 aa)) is the PET domain. The interval 133 to 164 (EKQPVAGSEGAQYRKKQLAKQLPAHDQDPSKC) is disordered. The span at 155-164 (PAHDQDPSKC) shows a compositional bias: basic and acidic residues. 3 consecutive LIM zinc-binding domains span residues 234–297 (YSCY…CDSE), 299–359 (PRCA…NHAV), and 362–421 (QGCH…KMMS).

The protein belongs to the prickle / espinas / testin family. Interacts via LIM domain 1 with ZYX. Interacts (via LIM domain 3) with ENAH and VASP. Interacts with ALKBH4, talin, actin, alpha-actinin, GRIP1 and PXN. Interacts (via LIM domain 2) with ACTL7A (via N-terminus). Heterodimer with ACTL7A; the heterodimer interacts with ENAH to form a heterotrimer.

The protein resides in the cytoplasm. The protein localises to the cell junction. It localises to the focal adhesion. Functionally, scaffold protein that may play a role in cell adhesion, cell spreading and in the reorganization of the actin cytoskeleton. Plays a role in the regulation of cell proliferation. May act as a tumor suppressor. This is Testin (TES) from Aotus nancymaae (Ma's night monkey).